Here is a 479-residue protein sequence, read N- to C-terminus: ATP synthase subunit beta (479 aa).

168-175 provides a ligand contact to ATP; the sequence is GGAGVGKT.

The protein belongs to the ATPase alpha/beta chains family. In terms of assembly, F-type ATPases have 2 components, CF(1) - the catalytic core - and CF(0) - the membrane proton channel. CF(1) has five subunits: alpha(3), beta(3), gamma(1), delta(1), epsilon(1). CF(0) has three main subunits: a(1), b(2) and c(9-12). The alpha and beta chains form an alternating ring which encloses part of the gamma chain. CF(1) is attached to CF(0) by a central stalk formed by the gamma and epsilon chains, while a peripheral stalk is formed by the delta and b chains.

It localises to the cell membrane. The catalysed reaction is ATP + H2O + 4 H(+)(in) = ADP + phosphate + 5 H(+)(out). Produces ATP from ADP in the presence of a proton gradient across the membrane. The catalytic sites are hosted primarily by the beta subunits. The protein is ATP synthase subunit beta of Frankia casuarinae (strain DSM 45818 / CECT 9043 / HFP020203 / CcI3).